A 288-amino-acid polypeptide reads, in one-letter code: Thymidylate synthase (288 aa).

Arginine 21 provides a ligand contact to dUMP. Residue asparagine 51 coordinates (6R)-5,10-methylene-5,6,7,8-tetrahydrofolate. 150-151 (RR) serves as a coordination point for dUMP. Catalysis depends on cysteine 170, which acts as the Nucleophile. Residues 190-193 (RSGD), asparagine 201, and 231-233 (HIY) contribute to the dUMP site. A (6R)-5,10-methylene-5,6,7,8-tetrahydrofolate-binding site is contributed by aspartate 193. Alanine 287 serves as a coordination point for (6R)-5,10-methylene-5,6,7,8-tetrahydrofolate.

This sequence belongs to the thymidylate synthase family. Bacterial-type ThyA subfamily. Homodimer.

It localises to the cytoplasm. The catalysed reaction is dUMP + (6R)-5,10-methylene-5,6,7,8-tetrahydrofolate = 7,8-dihydrofolate + dTMP. Its pathway is pyrimidine metabolism; dTTP biosynthesis. Catalyzes the reductive methylation of 2'-deoxyuridine-5'-monophosphate (dUMP) to 2'-deoxythymidine-5'-monophosphate (dTMP) while utilizing 5,10-methylenetetrahydrofolate (mTHF) as the methyl donor and reductant in the reaction, yielding dihydrofolate (DHF) as a by-product. This enzymatic reaction provides an intracellular de novo source of dTMP, an essential precursor for DNA biosynthesis. The protein is Thymidylate synthase of Phytoplasma mali (strain AT).